The following is a 111-amino-acid chain: Large ribosomal subunit protein uL22 (111 aa).

It belongs to the universal ribosomal protein uL22 family. In terms of assembly, part of the 50S ribosomal subunit.

Functionally, this protein binds specifically to 23S rRNA; its binding is stimulated by other ribosomal proteins, e.g. L4, L17, and L20. It is important during the early stages of 50S assembly. It makes multiple contacts with different domains of the 23S rRNA in the assembled 50S subunit and ribosome. The globular domain of the protein is located near the polypeptide exit tunnel on the outside of the subunit, while an extended beta-hairpin is found that lines the wall of the exit tunnel in the center of the 70S ribosome. The protein is Large ribosomal subunit protein uL22 of Citrifermentans bemidjiense (strain ATCC BAA-1014 / DSM 16622 / JCM 12645 / Bem) (Geobacter bemidjiensis).